The chain runs to 81 residues: Insulin (81 aa).

3 cysteine pairs are disulfide-bonded: cysteine 7/cysteine 67, cysteine 19/cysteine 80, and cysteine 66/cysteine 71. A propeptide spans 33–58 (DVEQPLVNGPLHGEVGELPFQHEEYQ) (c peptide).

Belongs to the insulin family. As to quaternary structure, heterodimer of a B chain and an A chain linked by two disulfide bonds.

The protein localises to the secreted. Insulin decreases blood glucose concentration. It increases cell permeability to monosaccharides, amino acids and fatty acids. It accelerates glycolysis, the pentose phosphate cycle, and glycogen synthesis in liver. This is Insulin (INS) from Anas platyrhynchos (Mallard).